Reading from the N-terminus, the 449-residue chain is Protein adenylyltransferase FICD (449 aa).

The helical transmembrane segment at 15–35 (LLWGWGPILFGLLGSVFVLLL) threads the bilayer. TPR repeat units lie at residues 96–129 (AKAA…NPEF) and 130–163 (VEAL…SPCH). Residues 220 to 225 (TVAIEG) carry the Inhibitory (S/T)XXXE(G/N) motif motif. ATP-binding positions include glutamate 224, 250 to 251 (EQ), 358 to 360 (GNG), and arginine 364. In terms of domain architecture, Fido spans 275-410 (ITVNDILEIH…VRPFIRFIAK (136 aa)).

It belongs to the fic family.

It is found in the membrane. It catalyses the reaction L-tyrosyl-[protein] + ATP = O-(5'-adenylyl)-L-tyrosyl-[protein] + diphosphate. It carries out the reaction L-threonyl-[protein] + ATP = 3-O-(5'-adenylyl)-L-threonyl-[protein] + diphosphate. Adenylyltransferase activity is inhibited by the inhibitory helix present at the N-terminus: Glu-224 binds ATP and competes with ATP-binding at Arg-364, thereby preventing adenylyltransferase activity. Activation dissociates ATP-binding from Glu-224, allowing ordered binding of the entire ATP moiety with the alpha-phosphate in an orientation that is productive for accepting an incoming target hydroxyl side chain. In terms of biological role, adenylyltransferase that mediates the addition of adenosine 5'-monophosphate (AMP) to specific residues of target proteins. In Danio rerio (Zebrafish), this protein is Protein adenylyltransferase FICD (ficd).